A 200-amino-acid chain; its full sequence is Recombination protein RecR (200 aa).

Residues cysteine 59–cysteine 74 form a C4-type zinc finger. In terms of domain architecture, Toprim spans glycine 82–proline 177.

This sequence belongs to the RecR family.

In terms of biological role, may play a role in DNA repair. It seems to be involved in an RecBC-independent recombinational process of DNA repair. It may act with RecF and RecO. The protein is Recombination protein RecR of Bifidobacterium animalis subsp. lactis (strain AD011).